Reading from the N-terminus, the 609-residue chain is Isopenicillin N epimerase component 1 (609 aa).

185–196 (MLSGSGTTGLPK) lines the AMP pocket. Residues 545–570 (STDNHKHNKVPLRDEGVDPRSMGSKV) form a disordered region.

Belongs to the ATP-dependent AMP-binding enzyme family.

It carries out the reaction isopenicillin N = penicillin N. It functions in the pathway antibiotic biosynthesis; cephalosporin C biosynthesis. Its function is as follows. Together with cefD2, catalyzes the reversible isomerization between isopenicillin N and penicillin N. This two-component IPN epimerase system may function by two sequential steps, an activation of isopenicillin N by the acyl-CoA synthase component cefD1, followed by epimerization by the acyl-CoA racemase component cefD2. In Hapsidospora chrysogena (Acremonium chrysogenum), this protein is Isopenicillin N epimerase component 1 (cefD1).